Reading from the N-terminus, the 388-residue chain is MDPITTASTEFCLDVFKELSSNNVGENIFFSPLTTFYALSMLLLGTRGKSAEQMEKVLHYDSFSGVLKAKTKNSSECSQVGVMHPDFRALISHINQQNSLSVANRIYGTRSISFHKQYVRCCEKLYQAKLQTVDFELSTEETRKSINAWVKNKTNGKITNLFAKGTIDPSSVMVLVSAIYFKGQWQNKFQKRETVKAPFHMGVGKSAVVNMMYQTGTFKLAIIKEPEMQVLELPYANNKLRMIILLPVGTASVSQIEKHLNVKMLREWTNPSNMVEREVDVHIPKFSLSVKYDLNTLLKSLGMRDIFNVANADLSGMSPDKGLYLSKVVHKSYVDVNEEGTEAAAATGESISVKRLPVTVQFTANCPFLFFIWDESGNILFAGKFASP.

The tract at residues 338–362 is RCL; that stretch reads EEGTEAAAATGESISVKRLPVTVQF.

Belongs to the serpin family. Ov-serpin subfamily. As to expression, expressed in eye, lung, lymphocytes, thymus, stomach, uterus, heart, brain, liver, skeletal muscle, and in day 7, 15, and 17 embryos.

The protein resides in the cytoplasm. Inhibitor of serine proteases. Has moderate inhibitory activity for trypsin-like peptidases, but also some activity with cysteine peptidases, cathepsin L, K, and V, and the serine peptidase, tryptase gamma. This chain is Serpin B11 (Serpinb11), found in Mus musculus (Mouse).